A 421-amino-acid polypeptide reads, in one-letter code: D-inositol 3-phosphate glycosyltransferase (421 aa).

Residue His13 coordinates 1D-myo-inositol 3-phosphate. Residues 19-20 and Gly27 each bind UDP-N-acetyl-alpha-D-glucosamine; that span reads QP. 1D-myo-inositol 3-phosphate-binding positions include 24–29, Lys82, Tyr115, Thr139, and Arg159; that span reads DAGGMN. The UDP-N-acetyl-alpha-D-glucosamine site is built by Arg233, Lys238, and Val294. Phe303, Arg304, and Ala306 together coordinate Mg(2+). UDP-N-acetyl-alpha-D-glucosamine contacts are provided by Glu316 and Glu324. Residue Thr330 participates in Mg(2+) binding.

This sequence belongs to the glycosyltransferase group 1 family. MshA subfamily. In terms of assembly, homodimer.

The catalysed reaction is 1D-myo-inositol 3-phosphate + UDP-N-acetyl-alpha-D-glucosamine = 1D-myo-inositol 2-acetamido-2-deoxy-alpha-D-glucopyranoside 3-phosphate + UDP + H(+). Catalyzes the transfer of a N-acetyl-glucosamine moiety to 1D-myo-inositol 3-phosphate to produce 1D-myo-inositol 2-acetamido-2-deoxy-glucopyranoside 3-phosphate in the mycothiol biosynthesis pathway. The protein is D-inositol 3-phosphate glycosyltransferase of Arthrobacter sp. (strain FB24).